Here is an 84-residue protein sequence, read N- to C-terminus: UPF0386 protein R01313 (84 aa).

The protein belongs to the UPF0386 family.

The chain is UPF0386 protein R01313 from Rhizobium meliloti (strain 1021) (Ensifer meliloti).